Here is a 353-residue protein sequence, read N- to C-terminus: UDP-N-acetylglucosamine--N-acetylmuramyl-(pentapeptide) pyrophosphoryl-undecaprenol N-acetylglucosamine transferase (353 aa).

UDP-N-acetyl-alpha-D-glucosamine contacts are provided by residues 15 to 17 (TGG), asparagine 125, arginine 165, serine 186, and glutamine 286.

The protein belongs to the glycosyltransferase 28 family. MurG subfamily.

It localises to the cell inner membrane. It catalyses the reaction di-trans,octa-cis-undecaprenyl diphospho-N-acetyl-alpha-D-muramoyl-L-alanyl-D-glutamyl-meso-2,6-diaminopimeloyl-D-alanyl-D-alanine + UDP-N-acetyl-alpha-D-glucosamine = di-trans,octa-cis-undecaprenyl diphospho-[N-acetyl-alpha-D-glucosaminyl-(1-&gt;4)]-N-acetyl-alpha-D-muramoyl-L-alanyl-D-glutamyl-meso-2,6-diaminopimeloyl-D-alanyl-D-alanine + UDP + H(+). The protein operates within cell wall biogenesis; peptidoglycan biosynthesis. Cell wall formation. Catalyzes the transfer of a GlcNAc subunit on undecaprenyl-pyrophosphoryl-MurNAc-pentapeptide (lipid intermediate I) to form undecaprenyl-pyrophosphoryl-MurNAc-(pentapeptide)GlcNAc (lipid intermediate II). The polypeptide is UDP-N-acetylglucosamine--N-acetylmuramyl-(pentapeptide) pyrophosphoryl-undecaprenol N-acetylglucosamine transferase (Chlamydia muridarum (strain MoPn / Nigg)).